Here is a 721-residue protein sequence, read N- to C-terminus: Polyribonucleotide nucleotidyltransferase (721 aa).

Mg(2+)-binding residues include Asp-495 and Asp-501. Residues 562-621 (PRITTIKIRPERIKDIIGPGGKTIKDITARTGTSINIEDDGSVSIASPNQDKVEEAIKMI) enclose the KH domain. The region spanning 631–699 (GRIYLGTVRK…RSGKIRLSRK (69 aa)) is the S1 motif domain. The segment at 699 to 721 (KEALADSAKKSEGTEPPKGEPAK) is disordered.

It belongs to the polyribonucleotide nucleotidyltransferase family. Mg(2+) is required as a cofactor.

It is found in the cytoplasm. It carries out the reaction RNA(n+1) + phosphate = RNA(n) + a ribonucleoside 5'-diphosphate. Its function is as follows. Involved in mRNA degradation. Catalyzes the phosphorolysis of single-stranded polyribonucleotides processively in the 3'- to 5'-direction. The polypeptide is Polyribonucleotide nucleotidyltransferase (Anaeromyxobacter dehalogenans (strain 2CP-1 / ATCC BAA-258)).